A 201-amino-acid chain; its full sequence is Large ribosomal subunit protein uL4 (201 aa).

The segment at 44 to 71 is disordered; that stretch reads RAQKTRAEVTGSGKKPWRQKGTGRARSG.

Belongs to the universal ribosomal protein uL4 family. As to quaternary structure, part of the 50S ribosomal subunit.

Functionally, one of the primary rRNA binding proteins, this protein initially binds near the 5'-end of the 23S rRNA. It is important during the early stages of 50S assembly. It makes multiple contacts with different domains of the 23S rRNA in the assembled 50S subunit and ribosome. Its function is as follows. Forms part of the polypeptide exit tunnel. The chain is Large ribosomal subunit protein uL4 from Enterobacter sp. (strain 638).